The primary structure comprises 555 residues: Dynein regulatory complex protein 11 (555 aa).

IQ domains lie at 154–183 (EDEA…TKRQ) and 199–226 (HEEA…ADKE). Disordered stretches follow at residues 232 to 255 (MKPK…MRRK), 299 to 377 (KRNP…EQKI), 450 to 469 (AAKL…EPFS), and 501 to 555 (AKKD…SCGA). Basic and acidic residues-rich tracts occupy residues 235 to 244 (KPRDPKRDPQ) and 338 to 367 (GDGK…KGGG). The span at 452–464 (KLGKKGKKKKGKK) shows a compositional bias: basic residues. A compositionally biased stretch (basic and acidic residues) spans 501 to 521 (AKKDEKDAAGDGKGKGKDGKG). Basic residues predominate over residues 537-546 (KKKKGGKKKS).

It belongs to the AAA ATPase family. DRC11 subfamily. Component of the nexin-dynein regulatory complex (N-DRC). Interacts with DRC5.

The protein localises to the cytoplasm. It is found in the cytoskeleton. It localises to the flagellum axoneme. Its function is as follows. Component of the nexin-dynein regulatory complex (N-DRC), a key regulator of ciliary/flagellar motility which maintains the alignment and integrity of the distal axoneme and regulates microtubule sliding in motile axonemes. The protein is Dynein regulatory complex protein 11 of Chlamydomonas reinhardtii (Chlamydomonas smithii).